We begin with the raw amino-acid sequence, 183 residues long: NEDD8-conjugating enzyme Ubc12 (183 aa).

An N-acetylmethionine modification is found at Met1. The segment at 1-28 (MIKLFSLKQQKKEEESAGGTKGSSKKAS) is disordered. Residues 29–173 (AAQLRIQKDI…VQRSMRGGYI (145 aa)) enclose the UBC core domain. Catalysis depends on Cys111, which acts as the Glycyl thioester intermediate.

The protein belongs to the ubiquitin-conjugating enzyme family. UBC12 subfamily. In terms of processing, the acetylation of Met-1 increases affinity for DCUN1D1 by about 2 orders of magnitude and is crucial for NEDD8 transfer to cullins.

It catalyses the reaction [E1 NEDD8-activating enzyme]-S-[NEDD8 protein]-yl-L-cysteine + [E2 NEDD8-conjugating enzyme]-L-cysteine = [E1 NEDD8-activating enzyme]-L-cysteine + [E2 NEDD8-conjugating enzyme]-S-[NEDD8-protein]-yl-L-cysteine.. The protein operates within protein modification; protein neddylation. Its function is as follows. Accepts the ubiquitin-like protein NEDD8 from the UBA3-NAE1 E1 complex and catalyzes its covalent attachment to other proteins. The specific interaction with the E3 ubiquitin ligase rbx1, but not rbx2, suggests that the rbx1-ube2m complex neddylates specific target proteins, such as cul1, cul2, cul3 and cul4. Involved in cell proliferation. This chain is NEDD8-conjugating enzyme Ubc12 (ube2m), found in Xenopus tropicalis (Western clawed frog).